A 208-amino-acid polypeptide reads, in one-letter code: Large ribosomal subunit protein uL4 (208 aa).

The tract at residues 54 to 78 (RAEVSHTTKKPWNQKGTGRARAGMS) is disordered.

It belongs to the universal ribosomal protein uL4 family. In terms of assembly, part of the 50S ribosomal subunit.

In terms of biological role, one of the primary rRNA binding proteins, this protein initially binds near the 5'-end of the 23S rRNA. It is important during the early stages of 50S assembly. It makes multiple contacts with different domains of the 23S rRNA in the assembled 50S subunit and ribosome. Functionally, forms part of the polypeptide exit tunnel. The protein is Large ribosomal subunit protein uL4 of Methylobacillus flagellatus (strain ATCC 51484 / DSM 6875 / VKM B-1610 / KT).